Reading from the N-terminus, the 350-residue chain is Renin receptor (350 aa).

The signal sequence occupies residues 1–17 (MAVLVVLLSSLVSSALA). At 18–302 (NEFSILRSPG…YNLAYKYNLE (285 aa)) the chain is on the extracellular side. The chain crosses the membrane as a helical span at residues 303–323 (YSVVFNLVLWIMTGLALAVII). The Cytoplasmic portion of the chain corresponds to 324–350 (TSYNIWNMDPGYDSIIYRMTNQKIRMD). Positions 346–350 (KIRMD) match the Mediates retrograde transport to the ER motif.

As to quaternary structure, interacts with renin. Accessory component of the multisubunit proton-transporting vacuolar (V)-ATPase protein pump. Interacts (via N-terminus) with ATP6AP1 (via N-terminus). Interacts with ATP6V0D1; ATP6V0D1 is a V-ATPase complex subunit and the interaction promotes V-ATPase complex assembly. Interacts with TMEM9; TMEM9 is a V-ATPase assembly regulator and the interaction induces the interaction with ATP6V0D1. Interacts with VMA21 (via N-terminus); VMA21 is a V-ATPase accessory component. Post-translationally, phosphorylated. Proteolytically cleaved by a furin-like convertase in the trans-Golgi network to generate N- and C-terminal fragments. Expressed in the brain.

The protein resides in the endoplasmic reticulum membrane. The protein localises to the lysosome membrane. Its subcellular location is the cytoplasmic vesicle. It is found in the autophagosome membrane. It localises to the cell projection. The protein resides in the dendritic spine membrane. The protein localises to the axon. Its subcellular location is the endosome membrane. It is found in the clathrin-coated vesicle membrane. It localises to the secretory vesicle. The protein resides in the synaptic vesicle membrane. In terms of biological role, multifunctional protein which functions as a renin, prorenin cellular receptor and is involved in the assembly of the lysosomal proton-transporting V-type ATPase (V-ATPase) and the acidification of the endo-lysosomal system. May mediate renin-dependent cellular responses by activating ERK1 and ERK2. By increasing the catalytic efficiency of renin in AGT/angiotensinogen conversion to angiotensin I, may also play a role in the renin-angiotensin system (RAS). Through its function in V-type ATPase (v-ATPase) assembly and acidification of the lysosome it regulates protein degradation and may control different signaling pathways important for proper brain development, synapse morphology and synaptic transmission. The sequence is that of Renin receptor (Atp6ap2) from Rattus norvegicus (Rat).